Consider the following 161-residue polypeptide: Nucleotide-binding protein Reut_A2760 (161 aa).

It belongs to the YajQ family.

Nucleotide-binding protein. The polypeptide is Nucleotide-binding protein Reut_A2760 (Cupriavidus pinatubonensis (strain JMP 134 / LMG 1197) (Cupriavidus necator (strain JMP 134))).